Reading from the N-terminus, the 139-residue chain is Plastocyanin (139 aa).

The N-terminal stretch at 1–34 (MKLIAASLRRLSLAVLTVLLVVSSFAVFTPSASA) is a signal peptide. Residues 35–139 (ETYTVKLGSD…GMVGKITVAG (105 aa)) form the Plastocyanin-like domain. Cu cation contacts are provided by His73, Cys123, His126, and Met131.

The protein belongs to the plastocyanin family. Cu(2+) is required as a cofactor.

The protein localises to the cellular thylakoid membrane. Participates in electron transfer between P700 and the cytochrome b6-f complex in photosystem I. The chain is Plastocyanin (petE) from Nostoc sp. (strain PCC 7120 / SAG 25.82 / UTEX 2576).